The chain runs to 201 residues: Rac-like GTP-binding protein ARAC2 (201 aa).

GTP is bound at residue 13–20 (GDGAVGKT). Residues 35–43 (YVPTVFDNF) carry the Effector region motif. GTP-binding positions include 60 to 64 (DTAGQ) and 118 to 121 (TKLD). Residue cysteine 198 is modified to Cysteine methyl ester. Cysteine 198 carries the S-geranylgeranyl cysteine lipid modification. The propeptide at 199-201 (FFL) is removed in mature form.

The protein belongs to the small GTPase superfamily. Rho family. In terms of tissue distribution, expressed exclusively in the root, hypocotyl and stem.

The protein localises to the cytoplasm. The protein resides in the membrane. Its function is as follows. Inactive GDP-bound Rho GTPases reside in the cytosol, are found in a complex with Rho GDP-dissociation inhibitors (Rho GDIs), and are released from the GDI protein in order to translocate to membranes upon activation. The chain is Rac-like GTP-binding protein ARAC2 (ARAC2) from Arabidopsis thaliana (Mouse-ear cress).